The primary structure comprises 366 residues: Transcription factor MYB28 (366 aa).

HTH myb-type domains follow at residues 9 to 61 (GEGL…TNYL) and 62 to 116 (KPEI…KKRL). 2 consecutive DNA-binding regions (H-T-H motif) follow at residues 37 to 61 (WRDI…TNYL) and 89 to 112 (WSVI…NTHL). Positions 124 to 170 (VTHKPLASSSNPTVDENLNSPNASSSDKQYSRSSSMPFLSRPPPSSC) are disordered. Polar residues predominate over residues 130–146 (ASSSNPTVDENLNSPNA). Low complexity predominate over residues 147 to 158 (SSSDKQYSRSSS).

As to quaternary structure, can form complexes with MYC2, MYC3 or MYC4. Expressed in generative organs, mature leaves and trichomes.

It localises to the nucleus. Major regulator of short-chained aliphatic glucosinolates (GLSs) biosynthesis. Together with MYB29/HAG3 and MYB76/HAG2, promotes aliphatic glucosinolate biosynthesis but represses indolic glucosinolate biosynthesis. Prevents insect performance (e.g. lepidopteran insect Mamestra brassicae and Spodoptera exigua) by promoting glucosinolates. The protein is Transcription factor MYB28 (MYB28) of Arabidopsis thaliana (Mouse-ear cress).